Here is a 452-residue protein sequence, read N- to C-terminus: Pup--protein ligase (452 aa).

Residue glutamate 9 coordinates Mg(2+). ATP is bound at residue arginine 53. Residue tyrosine 55 participates in Mg(2+) binding. Residue aspartate 57 is the Proton acceptor of the active site. Position 63 (glutamate 63) interacts with Mg(2+). Residues threonine 66 and tryptophan 419 each contribute to the ATP site.

Belongs to the Pup ligase/Pup deamidase family. Pup-conjugating enzyme subfamily.

It carries out the reaction ATP + [prokaryotic ubiquitin-like protein]-L-glutamate + [protein]-L-lysine = ADP + phosphate + N(6)-([prokaryotic ubiquitin-like protein]-gamma-L-glutamyl)-[protein]-L-lysine.. It functions in the pathway protein degradation; proteasomal Pup-dependent pathway. It participates in protein modification; protein pupylation. Catalyzes the covalent attachment of the prokaryotic ubiquitin-like protein modifier Pup to the proteasomal substrate proteins, thereby targeting them for proteasomal degradation. This tagging system is termed pupylation. The ligation reaction involves the side-chain carboxylate of the C-terminal glutamate of Pup and the side-chain amino group of a substrate lysine. The protein is Pup--protein ligase of Mycobacterium sp. (strain JLS).